We begin with the raw amino-acid sequence, 124 residues long: Small ribosomal subunit protein bS6 (124 aa).

Positions E96 to A124 are disordered. Residues A115 to A124 are compositionally biased toward polar residues.

This sequence belongs to the bacterial ribosomal protein bS6 family.

Functionally, binds together with bS18 to 16S ribosomal RNA. The chain is Small ribosomal subunit protein bS6 from Paraburkholderia phytofirmans (strain DSM 17436 / LMG 22146 / PsJN) (Burkholderia phytofirmans).